The sequence spans 166 residues: Urease accessory protein UreE (166 aa).

Residues 133–154 (QPEHGAYGGGHHHSRHGDEDFN) form a disordered region.

Belongs to the UreE family.

The protein resides in the cytoplasm. Functionally, involved in urease metallocenter assembly. Binds nickel. Probably functions as a nickel donor during metallocenter assembly. The polypeptide is Urease accessory protein UreE (Pseudomonas fluorescens (strain SBW25)).